Reading from the N-terminus, the 256-residue chain is 5-keto-4-deoxy-D-glucarate aldolase (256 aa).

The active-site Proton acceptor is the His-50. Gln-151 provides a ligand contact to substrate. Residue Glu-153 participates in Mg(2+) binding. The substrate site is built by Ser-178 and Asp-179. Asp-179 contributes to the Mg(2+) binding site.

Belongs to the HpcH/HpaI aldolase family. KDGluc aldolase subfamily. As to quaternary structure, homohexamer; trimer of dimers. Mg(2+) is required as a cofactor.

It carries out the reaction 5-dehydro-4-deoxy-D-glucarate = 2-hydroxy-3-oxopropanoate + pyruvate. The catalysed reaction is 2-dehydro-3-deoxy-D-glucarate = 2-hydroxy-3-oxopropanoate + pyruvate. It participates in carbohydrate acid metabolism; galactarate degradation; D-glycerate from galactarate: step 2/3. Catalyzes the reversible retro-aldol cleavage of both 5-keto-4-deoxy-D-glucarate and 2-keto-3-deoxy-D-glucarate to pyruvate and tartronic semialdehyde. The protein is 5-keto-4-deoxy-D-glucarate aldolase of Shigella dysenteriae serotype 1 (strain Sd197).